We begin with the raw amino-acid sequence, 214 residues long: Nucleoside triphosphate pyrophosphatase (214 aa).

The active-site Proton acceptor is aspartate 79.

Belongs to the Maf family. A divalent metal cation serves as cofactor.

It localises to the cytoplasm. It carries out the reaction a ribonucleoside 5'-triphosphate + H2O = a ribonucleoside 5'-phosphate + diphosphate + H(+). The enzyme catalyses a 2'-deoxyribonucleoside 5'-triphosphate + H2O = a 2'-deoxyribonucleoside 5'-phosphate + diphosphate + H(+). In terms of biological role, nucleoside triphosphate pyrophosphatase. May have a dual role in cell division arrest and in preventing the incorporation of modified nucleotides into cellular nucleic acids. This is Nucleoside triphosphate pyrophosphatase from Rhodococcus jostii (strain RHA1).